We begin with the raw amino-acid sequence, 676 residues long: RNA helicase NPH-II (676 aa).

A Helicase ATP-binding domain is found at 172–347; that stretch reads FSAWISHRPV…VFLPNPAFIH (176 aa). 185 to 192 contributes to the ATP binding site; that stretch reads GGTGVGKT. The DEXH box signature appears at 296–299; it reads DEVH. In terms of domain architecture, Helicase C-terminal spans 366-535; that stretch reads NPSSRMAYIE…NYILYANKFN (170 aa).

Belongs to the DEAD box helicase family. DEAH subfamily. As to quaternary structure, monomer.

It is found in the virion. It carries out the reaction ATP + H2O = ADP + phosphate + H(+). Its function is as follows. NTP-dependent helicase that catalyzes unidirectional unwinding of 3'tailed duplex RNAs and plays an important role during transcription of early mRNAs, presumably by preventing R-loop formation behind the elongating RNA polymerase. Might also play a role in the export of newly synthesized mRNA chains out of the core into the cytoplasm. Required for replication and propagation of viral particles. The chain is RNA helicase NPH-II (OPG084) from Bos taurus (Bovine).